Consider the following 312-residue polypeptide: Dihydroorotate dehydrogenase B (NAD(+)), catalytic subunit (312 aa).

Residues serine 23 and 47–48 (KA) contribute to the FMN site. Substrate-binding positions include lysine 47 and 71–75 (NAIGL). FMN contacts are provided by asparagine 103 and asparagine 131. Asparagine 131 lines the substrate pocket. Cysteine 134 serves as the catalytic Nucleophile. Positions 171 and 197 each coordinate FMN. 198–199 (NT) serves as a coordination point for substrate. Residues glycine 223, 249 to 250 (GG), and 271 to 272 (GT) contribute to the FMN site.

It belongs to the dihydroorotate dehydrogenase family. Type 1 subfamily. As to quaternary structure, heterotetramer of 2 PyrK and 2 PyrD type B subunits. FMN is required as a cofactor.

It is found in the cytoplasm. It catalyses the reaction (S)-dihydroorotate + NAD(+) = orotate + NADH + H(+). It functions in the pathway pyrimidine metabolism; UMP biosynthesis via de novo pathway; orotate from (S)-dihydroorotate (NAD(+) route): step 1/1. Its function is as follows. Catalyzes the conversion of dihydroorotate to orotate with NAD(+) as electron acceptor. The protein is Dihydroorotate dehydrogenase B (NAD(+)), catalytic subunit (pyrDB) of Streptococcus pneumoniae (strain ATCC BAA-255 / R6).